Here is a 175-residue protein sequence, read N- to C-terminus: Disulfide bond formation protein B (175 aa).

The Cytoplasmic portion of the chain corresponds to 1 to 13 (MSKLVTFSQQRSA). The chain crosses the membrane as a helical span at residues 14–30 (WLILMFSALGLEASALY). Residues 31-48 (FQYVMLLDPCVMCIYIRV) lie on the Periplasmic side of the membrane. A disulfide bridge connects residues Cys40 and Cys43. A helical membrane pass occupies residues 49–64 (AVLGLILAGLVGSIAP). Residues 65-71 (RFWIVRF) are Cytoplasmic-facing. Residues 72–89 (LGMSLWGVSSAWGAKLSF) traverse the membrane as a helical segment. Residues 90 to 144 (ELYQMQANPSPFSTCSFYPEFPTWMPLDAWMPSIFMPTGMCSDIPWTMMSLSMTQ) lie on the Periplasmic side of the membrane. Cys104 and Cys130 are joined by a disulfide. The helical transmembrane segment at 145 to 163 (WTLIAFVGYSIAFLLFIYP) threads the bilayer. The Cytoplasmic portion of the chain corresponds to 164 to 175 (GLLYKKPTNPYS).

This sequence belongs to the DsbB family.

It is found in the cell inner membrane. In terms of biological role, required for disulfide bond formation in some periplasmic proteins. Acts by oxidizing the DsbA protein. The protein is Disulfide bond formation protein B of Shewanella denitrificans (strain OS217 / ATCC BAA-1090 / DSM 15013).